Consider the following 342-residue polypeptide: Succinylglutamate desuccinylase (342 aa).

Histidine 64, glutamate 67, and histidine 159 together coordinate Zn(2+). Glutamate 222 is a catalytic residue.

The protein belongs to the AspA/AstE family. Succinylglutamate desuccinylase subfamily. Zn(2+) serves as cofactor.

The catalysed reaction is N-succinyl-L-glutamate + H2O = L-glutamate + succinate. It functions in the pathway amino-acid degradation; L-arginine degradation via AST pathway; L-glutamate and succinate from L-arginine: step 5/5. In terms of biological role, transforms N(2)-succinylglutamate into succinate and glutamate. The sequence is that of Succinylglutamate desuccinylase from Burkholderia orbicola (strain AU 1054).